The primary structure comprises 1208 residues: E3 ubiquitin-protein ligase DZIP3 (1208 aa).

The segment covering 10–29 (VRHPAVEDQRKEETENKLEK) has biased composition (basic and acidic residues). Disordered stretches follow at residues 10 to 38 (VRHPAVEDQRKEETENKLEKSSGQLNKQE) and 637 to 698 (GTSI…PHSV). Coiled-coil stretches lie at residues 14-43 (AVEDQRKEETENKLEKSSGQLNKQENDIPT), 647-676 (ESLKDLQEVKSKQRKKKKTKNKKNKDSKED), 792-853 (IASL…SKLN), and 904-939 (QLKAAVDSWNAIVADVRNKIAFLRTQYNEQINKVKQ). Polar residues predominate over residues 637-647 (GTSIPSESSTE). Residues 648-657 (SLKDLQEVKS) show a composition bias toward basic and acidic residues. Positions 658–669 (KQRKKKKTKNKK) are enriched in basic residues. Over residues 670-693 (NKDSKEDQVPYVVEKEEQLRKEQA) the composition is skewed to basic and acidic residues. Residues 1088–1145 (KSQSQGKSVSNVNCVSPSHSPSQPDAAQPPKPAWRPLTSQGPATWEGASNPDEEEEEE) are disordered. Positions 1089–1112 (SQSQGKSVSNVNCVSPSHSPSQPD) are enriched in polar residues. The RING-type; atypical zinc-finger motif lies at 1148-1188 (CVICHENLSPENLSVLPCAHKFHAQCIRPWLMQQGTCPTCR).

Interacts with DAZ proteins. As to expression, widely expressed at low level. Highly expressed in skeletal muscle, kidney and heart. Expressed at low level in placenta, lung, brain, liver and pancreas.

Its subcellular location is the cytoplasm. It catalyses the reaction S-ubiquitinyl-[E2 ubiquitin-conjugating enzyme]-L-cysteine + [acceptor protein]-L-lysine = [E2 ubiquitin-conjugating enzyme]-L-cysteine + N(6)-ubiquitinyl-[acceptor protein]-L-lysine.. The protein operates within protein modification; protein ubiquitination. Functionally, E3 Ubiquitin ligase proteins mediate ubiquitination and subsequent proteasomal degradation of target proteins. E3 ubiquitin ligases accept ubiquitin from an E2 ubiquitin-conjugating enzyme in the form of a thioester and then directly transfers the ubiquitin to targeted substrates. Able to specifically bind RNA. This chain is E3 ubiquitin-protein ligase DZIP3 (DZIP3), found in Homo sapiens (Human).